A 371-amino-acid polypeptide reads, in one-letter code: Methylthioribose-1-phosphate isomerase (371 aa).

Residues 53 to 55 (RGA), Arg-90, and Gln-203 contribute to the substrate site. Asp-243 functions as the Proton donor in the catalytic mechanism. 253-254 (NK) provides a ligand contact to substrate.

Belongs to the eIF-2B alpha/beta/delta subunits family. MtnA subfamily.

It carries out the reaction 5-(methylsulfanyl)-alpha-D-ribose 1-phosphate = 5-(methylsulfanyl)-D-ribulose 1-phosphate. The enzyme catalyses 5-deoxy-alpha-D-ribose 1-phosphate = 5-deoxy-D-ribulose 1-phosphate. The protein operates within amino-acid biosynthesis; L-methionine biosynthesis via salvage pathway; L-methionine from S-methyl-5-thio-alpha-D-ribose 1-phosphate: step 1/6. In terms of biological role, catalyzes the interconversion of methylthioribose-1-phosphate (MTR-1-P) into methylthioribulose-1-phosphate (MTRu-1-P). Also catalyzes the interconversion of 5-deoxyribose 1-phosphate and 5-deoxyribulose 1-phosphate. Part of a bifunctional DHAP-shunt salvage pathway for SAM by-products. This chain is Methylthioribose-1-phosphate isomerase, found in Escherichia coli O45:K1 (strain S88 / ExPEC).